Reading from the N-terminus, the 272-residue chain is Elongation factor Ts (272 aa).

The tract at residues 76 to 79 (TDFV) is involved in Mg(2+) ion dislocation from EF-Tu.

The protein belongs to the EF-Ts family.

The protein localises to the cytoplasm. Its function is as follows. Associates with the EF-Tu.GDP complex and induces the exchange of GDP to GTP. It remains bound to the aminoacyl-tRNA.EF-Tu.GTP complex up to the GTP hydrolysis stage on the ribosome. This chain is Elongation factor Ts, found in Corynebacterium urealyticum (strain ATCC 43042 / DSM 7109).